Here is a 317-residue protein sequence, read N- to C-terminus: Mitochondrial outer membrane protein porin 4 (317 aa).

The interval 1–30 (MEAETECKVPGVYSETGIPVEDPAPGLNSD) is disordered.

The protein belongs to the eukaryotic mitochondrial porin (TC 1.B.8.1) family.

Its subcellular location is the mitochondrion outer membrane. Functionally, forms a channel through the mitochondrial outer membrane that allows diffusion of small hydrophilic molecules. The channel adopts an open conformation at low or zero membrane potential and a closed conformation at potentials above 30-40 mV. The open state has a weak anion selectivity whereas the closed state is cation-selective. The protein is Mitochondrial outer membrane protein porin 4 (VDAC4) of Oryza sativa subsp. japonica (Rice).